The chain runs to 208 residues: Large ribosomal subunit protein uL3 (208 aa).

This sequence belongs to the universal ribosomal protein uL3 family. Part of the 50S ribosomal subunit. Forms a cluster with proteins L14 and L19.

In terms of biological role, one of the primary rRNA binding proteins, it binds directly near the 3'-end of the 23S rRNA, where it nucleates assembly of the 50S subunit. This is Large ribosomal subunit protein uL3 from Salinibacter ruber (strain DSM 13855 / M31).